A 358-amino-acid chain; its full sequence is Probable branched-chain-amino-acid aminotransferase (358 aa).

K196 is modified (N6-(pyridoxal phosphate)lysine).

It belongs to the class-IV pyridoxal-phosphate-dependent aminotransferase family. Pyridoxal 5'-phosphate is required as a cofactor.

The catalysed reaction is L-leucine + 2-oxoglutarate = 4-methyl-2-oxopentanoate + L-glutamate. It carries out the reaction L-isoleucine + 2-oxoglutarate = (S)-3-methyl-2-oxopentanoate + L-glutamate. The enzyme catalyses L-valine + 2-oxoglutarate = 3-methyl-2-oxobutanoate + L-glutamate. It participates in amino-acid biosynthesis; L-isoleucine biosynthesis; L-isoleucine from 2-oxobutanoate: step 4/4. Its pathway is amino-acid biosynthesis; L-leucine biosynthesis; L-leucine from 3-methyl-2-oxobutanoate: step 4/4. It functions in the pathway amino-acid biosynthesis; L-valine biosynthesis; L-valine from pyruvate: step 4/4. In terms of biological role, acts on leucine, isoleucine and valine. The protein is Probable branched-chain-amino-acid aminotransferase (ilvE) of Staphylococcus aureus (strain N315).